A 307-amino-acid polypeptide reads, in one-letter code: UPF0749 protein MT1871 (307 aa).

Residues 1–23 (MAESDRLLGGYDPNAGYSAHAGA) form the signal peptide. Transmembrane regions (helical) follow at residues 67 to 87 (VSWMWQALAATLVAAVFAAAV) and 152 to 172 (VLSLAAASAPVVGPGLTVTVT).

Belongs to the UPF0749 family.

Its subcellular location is the cell membrane. The chain is UPF0749 protein MT1871 from Mycobacterium tuberculosis (strain CDC 1551 / Oshkosh).